Here is a 151-residue protein sequence, read N- to C-terminus: UPF0178 protein CPS_3584 (151 aa).

Belongs to the UPF0178 family.

This Colwellia psychrerythraea (strain 34H / ATCC BAA-681) (Vibrio psychroerythus) protein is UPF0178 protein CPS_3584.